A 152-amino-acid polypeptide reads, in one-letter code: Transcriptional regulator MraZ (152 aa).

2 SpoVT-AbrB domains span residues 5–52 (ATLV…PLPE) and 81–124 (ASEC…DETT).

It belongs to the MraZ family. As to quaternary structure, forms oligomers.

Its subcellular location is the cytoplasm. The protein localises to the nucleoid. Functionally, negatively regulates its own expression and that of the subsequent genes in the proximal part of the division and cell wall (dcw) gene cluster. Acts by binding directly to DNA. May also regulate the expression of genes outside the dcw cluster. The protein is Transcriptional regulator MraZ of Shigella sonnei (strain Ss046).